The sequence spans 463 residues: L-seryl-tRNA(Sec) selenium transferase (463 aa).

N6-(pyridoxal phosphate)lysine is present on lysine 295.

This sequence belongs to the SelA family. As to quaternary structure, homodecamer; pentamer of dimers. Binds only one seryl-tRNA(Sec) per dimer. The cofactor is pyridoxal 5'-phosphate.

The protein resides in the cytoplasm. It carries out the reaction L-seryl-tRNA(Sec) + selenophosphate + H(+) = L-selenocysteinyl-tRNA(Sec) + phosphate. It participates in aminoacyl-tRNA biosynthesis; selenocysteinyl-tRNA(Sec) biosynthesis; selenocysteinyl-tRNA(Sec) from L-seryl-tRNA(Sec) (bacterial route): step 1/1. Its function is as follows. Converts seryl-tRNA(Sec) to selenocysteinyl-tRNA(Sec) required for selenoprotein biosynthesis. The protein is L-seryl-tRNA(Sec) selenium transferase of Escherichia coli O45:K1 (strain S88 / ExPEC).